We begin with the raw amino-acid sequence, 329 residues long: Fructose-1,6-bisphosphatase class 1 (329 aa).

The Mg(2+) site is built by E84, D103, L105, and D106. Substrate is bound by residues 106–109, N196, and K262; that span reads DGSS. Residue E268 coordinates Mg(2+).

The protein belongs to the FBPase class 1 family. As to quaternary structure, homotetramer. Mg(2+) is required as a cofactor.

The protein localises to the cytoplasm. The enzyme catalyses beta-D-fructose 1,6-bisphosphate + H2O = beta-D-fructose 6-phosphate + phosphate. The protein operates within carbohydrate biosynthesis; gluconeogenesis. The polypeptide is Fructose-1,6-bisphosphatase class 1 (Shewanella woodyi (strain ATCC 51908 / MS32)).